We begin with the raw amino-acid sequence, 133 residues long: Agouti-signaling protein (133 aa).

An N-terminal signal peptide occupies residues 1–22 (MDVSRLLLATLLVCLCFLTAYS). Asn-39 carries an N-linked (GlcNAc...) asparagine glycan. A disordered region spans residues 56–95 (NKKSKKISRNEAEKKKRPSKRKAPMKNVARTRPPPPTPCV). Over residues 70–79 (KKRPSKRKAP) the composition is skewed to basic residues. Intrachain disulfides connect Cys-94–Cys-109, Cys-101–Cys-115, Cys-108–Cys-126, Cys-112–Cys-133, and Cys-117–Cys-124. The 40-residue stretch at 94–133 (CVATRDSCKPPAPACCDPCAFCQCRFFRSACSCRVLNPTC) folds into the Agouti domain.

Its subcellular location is the secreted. Its function is as follows. Involved in the regulation of melanogenesis. The binding of ASP to MC1R precludes alpha-MSH initiated signaling and thus blocks production of cAMP, leading to a down-regulation of eumelanogenesis (brown/black pigment) and thus increasing synthesis of pheomelanin (yellow/red pigment). This chain is Agouti-signaling protein (ASIP), found in Bos taurus (Bovine).